We begin with the raw amino-acid sequence, 239 residues long: Ribosomal RNA small subunit methyltransferase G (239 aa).

Residues G77, F82, 128-129, and R146 each bind S-adenosyl-L-methionine; that span reads AE. The disordered stretch occupies residues 215-239; it reads DKRSQTPKKYPRKPGTPNKSPLLEK.

Belongs to the methyltransferase superfamily. RNA methyltransferase RsmG family.

The protein resides in the cytoplasm. Its function is as follows. Specifically methylates the N7 position of guanine in position 535 of 16S rRNA. In Staphylococcus saprophyticus subsp. saprophyticus (strain ATCC 15305 / DSM 20229 / NCIMB 8711 / NCTC 7292 / S-41), this protein is Ribosomal RNA small subunit methyltransferase G.